The chain runs to 106 residues: MAHHHDHEHDHNHDERELITLVDDQGNETLFEILLTIDGQEEFGKNYVLLIPASAEEDENGEVEIQAYSYIENENGTEGDLQPIPEDATAEWDMIEEVFNSFMEEE.

This sequence belongs to the UPF0473 family.

The polypeptide is UPF0473 protein SSU98_0068 (Streptococcus suis (strain 98HAH33)).